The sequence spans 275 residues: Tryptophan synthase alpha chain (275 aa).

Active-site proton acceptor residues include glutamate 51 and aspartate 62.

This sequence belongs to the TrpA family. In terms of assembly, tetramer of two alpha and two beta chains.

The catalysed reaction is (1S,2R)-1-C-(indol-3-yl)glycerol 3-phosphate + L-serine = D-glyceraldehyde 3-phosphate + L-tryptophan + H2O. Its pathway is amino-acid biosynthesis; L-tryptophan biosynthesis; L-tryptophan from chorismate: step 5/5. The alpha subunit is responsible for the aldol cleavage of indoleglycerol phosphate to indole and glyceraldehyde 3-phosphate. The sequence is that of Tryptophan synthase alpha chain from Methanopyrus kandleri (strain AV19 / DSM 6324 / JCM 9639 / NBRC 100938).